A 257-amino-acid chain; its full sequence is Snake venom serine protease Haly-2 (257 aa).

Residues 1–18 form the signal peptide; the sequence is MVLIRVLANLLILQLSYA. Positions 19-24 are excised as a propeptide; that stretch reads QKSSEL. Positions 25-248 constitute a Peptidase S1 domain; it reads IIGGDECNIN…HLEWIRSIIA (224 aa). Cystine bridges form between Cys31/Cys162, Cys49/Cys65, Cys97/Cys255, Cys141/Cys209, Cys173/Cys188, and Cys199/Cys224. His64 (charge relay system) is an active-site residue. Asn100 is a glycosylation site (N-linked (GlcNAc...) asparagine). The active-site Charge relay system is the Asp109. Ser203 (charge relay system) is an active-site residue.

Belongs to the peptidase S1 family. Snake venom subfamily. In terms of assembly, monomer. Expressed by the venom gland.

The protein localises to the secreted. Its function is as follows. Snake venom serine protease that may act in the hemostasis system of the prey. This chain is Snake venom serine protease Haly-2, found in Gloydius brevicauda (Korean slamosa snake).